The sequence spans 385 residues: Probable caffeine synthase MTL1 (385 aa).

Tyr18, Cys62, Asn67, Asp101, Leu102, Ser140, and Phe141 together coordinate S-adenosyl-L-homocysteine. Caffeine-binding residues include Tyr158, Gln161, and Phe162. Asn179 is a binding site for Mg(2+). Thr238 is a binding site for caffeine. 3 residues coordinate Mg(2+): Asp261, Phe263, and Asn264. Caffeine is bound at residue Tyr369.

It belongs to the methyltransferase superfamily. Type-7 methyltransferase family. It depends on Mg(2+) as a cofactor.

The protein operates within alkaloid biosynthesis. Functionally, may be involved in the biosynthesis of caffeine. The protein is Probable caffeine synthase MTL1 of Coffea canephora (Robusta coffee).